We begin with the raw amino-acid sequence, 474 residues long: Poly(A) polymerase catalytic subunit (474 aa).

Catalysis depends on residues D193 and D195.

The protein belongs to the poxviridae poly(A) polymerase catalytic subunit family. In terms of assembly, heterodimer of a large (catalytic) subunit and a small (regulatory) subunit.

The catalysed reaction is RNA(n) + ATP = RNA(n)-3'-adenine ribonucleotide + diphosphate. In terms of biological role, polymerase that creates the 3'-poly(A) tail of mRNA's. This chain is Poly(A) polymerase catalytic subunit (PAPL), found in Bos taurus (Bovine).